The chain runs to 158 residues: Small ribosomal subunit protein uS9 (158 aa).

The protein belongs to the universal ribosomal protein uS9 family.

The protein is Small ribosomal subunit protein uS9 of Rhodopseudomonas palustris (strain BisA53).